Here is a 349-residue protein sequence, read N- to C-terminus: Thylakoid lumenal 29 kDa protein, chloroplastic (349 aa).

Phosphoserine is present on S155.

This sequence belongs to the peroxidase family.

The protein resides in the plastid. Its subcellular location is the chloroplast thylakoid lumen. The sequence is that of Thylakoid lumenal 29 kDa protein, chloroplastic (TL29) from Arabidopsis thaliana (Mouse-ear cress).